The chain runs to 306 residues: NAD kinase 1 (306 aa).

Residue D67 is the Proton acceptor of the active site. NAD(+)-binding positions include 67–68 (DG), 149–150 (ND), and D181.

The protein belongs to the NAD kinase family. The cofactor is a divalent metal cation.

It is found in the cytoplasm. It carries out the reaction NAD(+) + ATP = ADP + NADP(+) + H(+). Its function is as follows. Involved in the regulation of the intracellular balance of NAD and NADP, and is a key enzyme in the biosynthesis of NADP. Catalyzes specifically the phosphorylation on 2'-hydroxyl of the adenosine moiety of NAD to yield NADP. The chain is NAD kinase 1 from Synechococcus sp. (strain ATCC 27144 / PCC 6301 / SAUG 1402/1) (Anacystis nidulans).